We begin with the raw amino-acid sequence, 238 residues long: AGEGNGRGPYVQADLAYAYEHITHDYPKPTDPSKGKLSTVSDYFRNIRTHSIHPRVSVGYDFGGWRIAADYARYRKWNDSKYSVSIKNLQRRTSNGNRRDRKTENQENGSFHAVSSLGLSAVYDFKLNDKFKPYIGARVAYGHVRHSIDSTKKTTEFLTTAGARGTDPTVSSPYKNTQDAHQESNSIRRVGLGVIAGVGFDITPNLTLDAGYRYHNWGRLENTRFKTHEASLGVRYRF.

Alanine 1 is a signal peptide. Disordered regions lie at residues 88-109 (NLQRRTSNGNRRDRKTENQENG) and 162-183 (GARGTDPTVSSPYKNTQDAHQE). Residues 168-183 (PTVSSPYKNTQDAHQE) show a composition bias toward polar residues.

Belongs to the opacity porin family.

The protein resides in the cell outer membrane. In terms of biological role, implicated in a number of adherence functions. OPA proteins are implicated in pathogenesis and are subject to phase variation. The polypeptide is Opacity protein opA66 (Neisseria gonorrhoeae).